We begin with the raw amino-acid sequence, 144 residues long: Large ribosomal subunit protein uL15 (144 aa).

The tract at residues 1–53 (MRLNSLSPAEGAKHSAKRLGRGIGSGLGKTGGRGHKGQKSRTGGGVRRGFEGG) is disordered. The segment covering 21–31 (RGIGSGLGKTG) has biased composition (gly residues).

Belongs to the universal ribosomal protein uL15 family. As to quaternary structure, part of the 50S ribosomal subunit.

Functionally, binds to the 23S rRNA. This is Large ribosomal subunit protein uL15 from Glaesserella parasuis serovar 5 (strain SH0165) (Haemophilus parasuis).